The following is a 440-amino-acid chain: Murein DD-endopeptidase MepM (440 aa).

Residues 21-40 (VMLGSLTVLTLAVAVWRPYV) form a helical membrane-spanning segment. In terms of domain architecture, LysM spans 96-141 (HEYVVSTGDTLSSILNQYGIDMGDITQLAAADKELRNLKIGQQLSW). Histidine 314 contributes to the Zn(2+) binding site.

Belongs to the peptidase M23B family. The cofactor is Zn(2+).

It is found in the cell membrane. It participates in cell wall biogenesis; cell wall polysaccharide biosynthesis. Functionally, a murein DD-endopeptidase with specificity for D-Ala-meso-diaminopimelic acid (mDAP) cross-links. Its role is probably to cleave D-Ala-mDAP cross-links to allow insertion of new glycans and thus cell wall expansion. Functionally redundant with MepM and MepH. This is Murein DD-endopeptidase MepM (mepM) from Escherichia coli O6:H1 (strain CFT073 / ATCC 700928 / UPEC).